The following is a 144-amino-acid chain: Ribonuclease VapC1 (144 aa).

Residues 6–132 (VFVDGNVIVD…SFYSPDIEVL (127 aa)) form the PINc domain. Residues Asp9 and Asp102 each contribute to the Mg(2+) site.

The protein belongs to the PINc/VapC protein family. Mg(2+) is required as a cofactor.

Functionally, toxic component of a type II toxin-antitoxin (TA) system. An RNase. The sequence is that of Ribonuclease VapC1 from Aquifex aeolicus (strain VF5).